Consider the following 683-residue polypeptide: Receptor-like serine/threonine-protein kinase At2g45590 (683 aa).

A disordered region spans residues Met1–Asp21. The Extracellular segment spans residues Met1 to Pro30. Residues Leu31–Ile51 traverse the membrane as a helical segment. At Tyr52–Arg683 the chain is on the cytoplasmic side. Residues Phe92 to Phe664 enclose the Protein kinase domain. Residues Leu98–Val106 and Lys121 each bind ATP. The active-site Proton acceptor is Asp223. The segment at Glu406 to Pro436 is disordered. The span at Asn411–Val424 shows a compositional bias: polar residues. Basic residues predominate over residues Ser425–Pro436.

The protein belongs to the protein kinase superfamily. Ser/Thr protein kinase family.

The protein resides in the cell membrane. The enzyme catalyses L-seryl-[protein] + ATP = O-phospho-L-seryl-[protein] + ADP + H(+). It catalyses the reaction L-threonyl-[protein] + ATP = O-phospho-L-threonyl-[protein] + ADP + H(+). In Arabidopsis thaliana (Mouse-ear cress), this protein is Receptor-like serine/threonine-protein kinase At2g45590.